We begin with the raw amino-acid sequence, 298 residues long: Lactose transport system permease protein LacF (298 aa).

6 consecutive transmembrane segments (helical) span residues 17-37, 77-97, 112-132, 151-171, 208-228, and 269-289; these read GWLFVAPAIALISVFMLYPIL, VIFFVVQVPIMITMALILAAM, MIFLPCVSSLVAYSILFKSMF, PIGWLTDPFWAKVLIIIAITW, AFLTIPMLKPVILFTTITSTI, and FSYAATVSYVIVLMVAVLSFL. The region spanning 73–290 is the ABC transmembrane type-1 domain; the sequence is LQNTVIFFVV…LMVAVLSFLQ (218 aa).

It belongs to the binding-protein-dependent transport system permease family. MalFG subfamily.

The protein resides in the cell inner membrane. In terms of biological role, part of the binding-protein-dependent transport system for lactose. Probably responsible for the translocation of the substrate across the membrane. The sequence is that of Lactose transport system permease protein LacF (lacF) from Rhizobium radiobacter (Agrobacterium tumefaciens).